The primary structure comprises 3526 residues: WD repeat and FYVE domain-containing protein 3 (3526 aa).

Residues Ser1942 and Ser2278 each carry the phosphoserine modification. The interval 2285-2981 is sufficient for localization to p62 bodies/ALIS; it reads LTGSRRNRKE…PHPPKRVRSR (697 aa). Disordered regions lie at residues 2403–2429 and 2459–2522; these read ETNV…PARY and SSEG…EKTD. Residues 2468-2477 show a composition bias toward basic and acidic residues; sequence EPEHGEDTIA. Ser2492 bears the Phosphoserine mark. Positions 2531 to 2656 constitute a BEACH-type PH domain; the sequence is EEGEKIQHMY…IRNKVYQRFL (126 aa). Positions 2586–3526 are interaction with SQSTM1; sequence MHEPIIPRGA…RGSEDGPRNC (941 aa). The region spanning 2683-2976 is the BEACH domain; the sequence is GLLSTLVGEK…QLFKKPHPPK (294 aa). The segment at 2981 to 3526 is interaction with ATG5; that stretch reads RLNGDNAGIS…RGSEDGPRNC (546 aa). 4 WD repeats span residues 3077–3115, 3125–3164, 3167–3206, and 3210–3254; these read SEWG…EKAK, GHTD…FLTQ, GHRA…VSVN, and GRSQ…VPET. The disordered stretch occupies residues 3272–3335; it reads AQIGQEAQDE…SGSDDSRRWS (64 aa). The segment covering 3278–3290 has biased composition (acidic residues); the sequence is AQDEDSSDSEADE. The tract at residues 3313–3363 is interaction with GABARAP; it reads AASCRATAAWCTDSGSDDSRRWSDQLSLDEKDGFIFVNYSEGQTRAHLQGP. 2 positions are modified to phosphoserine: Ser3335 and Ser3339. An LC3-interacting region (LIR) motif is present at residues 3346–3349; it reads FIFV. Residues 3408-3447 form a WD 5 repeat; it reads AHPAEVTALGISKDHSRILVGDSRGRVFSWSVSDQPGRSA. The segment at 3454–3514 adopts an FYVE-type zinc-finger fold; it reads DEGGDSCSGC…VCQNCYYNLQ (61 aa). 8 residues coordinate Zn(2+): Cys3460, Cys3463, Cys3476, Cys3479, Cys3484, Cys3487, Cys3506, and Cys3509.

Directly interacts with ATG5 and associates with the ATG12-ATG5-ATG16L complex. Interacts with p62/SQSTM1; this interaction is required to recruit WDFY3 to cytoplasmic bodies and to PML bodies. Directly interacts with GABARAP, GABARAPL1 and GABARAPL2; the interaction with GABARAP is required for WDFY3 recruitment to MAP1LC3B-positive p62/SQSTM1 bodies. Weakly interacts with MAP1LC3C; this interaction is direct. Does not interact with MAP1LC3A, nor MAP1LC3B. Interacts with TRAF6. As to expression, expressed in osteoclast and their mononuclear precursors (at protein level).

The protein localises to the nucleus membrane. It is found in the cytoplasm. It localises to the cytosol. The protein resides in the nucleus. Its subcellular location is the PML body. The protein localises to the membrane. It is found in the perikaryon. It localises to the cell projection. The protein resides in the axon. Required for selective macroautophagy (aggrephagy). Acts as an adapter protein by linking specific proteins destined for degradation to the core autophagic machinery members, such as the ATG5-ATG12-ATG16L E3-like ligase, SQSTM1 and LC3. Along with p62/SQSTM1, involved in the formation and autophagic degradation of cytoplasmic ubiquitin-containing inclusions (p62 bodies, ALIS/aggresome-like induced structures). Along with SQSTM1, required to recruit ubiquitinated proteins to PML bodies in the nucleus. Important for normal brain development. Essential for the formation of axonal tracts throughout the brain and spinal cord, including the formation of the major forebrain commissures. Involved in the ability of neural cells to respond to guidance cues. Required for cortical neurons to respond to the trophic effects of netrin-1/NTN1. Regulates Wnt signaling through the removal of DVL3 aggregates, likely in an autophagy-dependent manner. This process may be important for the determination of brain size during embryonic development. May regulate osteoclastogenesis by acting on the TNFSF11/RANKL - TRAF6 pathway. After cytokinetic abscission, involved in midbody remnant degradation. In vitro strongly binds to phosphatidylinositol 3-phosphate (PtdIns3P). This Homo sapiens (Human) protein is WD repeat and FYVE domain-containing protein 3 (WDFY3).